A 428-amino-acid chain; its full sequence is Putative zinc metalloprotease SAS1196 (428 aa).

Residue His-21 coordinates Zn(2+). Residue Glu-22 is part of the active site. Residue His-25 participates in Zn(2+) binding. The next 4 membrane-spanning stretches (helical) occupy residues 172 to 194, 309 to 331, 352 to 374, and 401 to 420; these read FLTL…IGLA, GSTL…GFSF, IISL…LIPI, and TTII…LVTW. The 84-residue stretch at 186–269 folds into the PDZ domain; that stretch reads ALVLFIGLAY…TKSVELTPKK (84 aa).

The protein belongs to the peptidase M50B family. Zn(2+) is required as a cofactor.

The protein resides in the cell membrane. In Staphylococcus aureus (strain MSSA476), this protein is Putative zinc metalloprotease SAS1196.